A 388-amino-acid polypeptide reads, in one-letter code: Succinate--CoA ligase [ADP-forming] subunit beta (388 aa).

Residues 9–244 (KEILRKYNVP…LDEEDANEIE (236 aa)) enclose the ATP-grasp domain. Residues Lys46, 53–55 (GRG), Glu99, Ala102, and Glu107 contribute to the ATP site. The Mg(2+) site is built by Asn199 and Asp213. Substrate contacts are provided by residues Asn264 and 321–323 (GIM).

It belongs to the succinate/malate CoA ligase beta subunit family. In terms of assembly, heterotetramer of two alpha and two beta subunits. Mg(2+) is required as a cofactor.

It carries out the reaction succinate + ATP + CoA = succinyl-CoA + ADP + phosphate. The enzyme catalyses GTP + succinate + CoA = succinyl-CoA + GDP + phosphate. It participates in carbohydrate metabolism; tricarboxylic acid cycle; succinate from succinyl-CoA (ligase route): step 1/1. Functionally, succinyl-CoA synthetase functions in the citric acid cycle (TCA), coupling the hydrolysis of succinyl-CoA to the synthesis of either ATP or GTP and thus represents the only step of substrate-level phosphorylation in the TCA. The beta subunit provides nucleotide specificity of the enzyme and binds the substrate succinate, while the binding sites for coenzyme A and phosphate are found in the alpha subunit. The sequence is that of Succinate--CoA ligase [ADP-forming] subunit beta from Cupriavidus necator (strain ATCC 17699 / DSM 428 / KCTC 22496 / NCIMB 10442 / H16 / Stanier 337) (Ralstonia eutropha).